We begin with the raw amino-acid sequence, 175 residues long: NADH-quinone oxidoreductase subunit I 2 (175 aa).

2 4Fe-4S ferredoxin-type domains span residues 50–82 (HVLQ…IEAA) and 98–127 (KVYN…HGHG). Residues cysteine 62, cysteine 65, cysteine 68, cysteine 72, cysteine 107, cysteine 110, cysteine 113, and cysteine 117 each contribute to the [4Fe-4S] cluster site.

Belongs to the complex I 23 kDa subunit family. In terms of assembly, NDH-1 is composed of 14 different subunits. Subunits NuoA, H, J, K, L, M, N constitute the membrane sector of the complex. The cofactor is [4Fe-4S] cluster.

Its subcellular location is the cell inner membrane. It carries out the reaction a quinone + NADH + 5 H(+)(in) = a quinol + NAD(+) + 4 H(+)(out). NDH-1 shuttles electrons from NADH, via FMN and iron-sulfur (Fe-S) centers, to quinones in the respiratory chain. The immediate electron acceptor for the enzyme in this species is believed to be ubiquinone. Couples the redox reaction to proton translocation (for every two electrons transferred, four hydrogen ions are translocated across the cytoplasmic membrane), and thus conserves the redox energy in a proton gradient. The sequence is that of NADH-quinone oxidoreductase subunit I 2 from Koribacter versatilis (strain Ellin345).